We begin with the raw amino-acid sequence, 1435 residues long: Dicer-like protein 2 (1435 aa).

Positions 54–234 constitute a Helicase ATP-binding domain; the sequence is MLSESLRQNI…LEVLEINLNA (181 aa). An ATP-binding site is contributed by 67–74; sequence MDTGSGKT. The short motif at 175-178 is the DEAH box element; it reads DEAH. In terms of domain architecture, Helicase C-terminal spans 400–564; it reads KLIDFLVLEH…ENKRALEHIQ (165 aa). One can recognise a Dicer dsRNA-binding fold domain in the interval 591 to 684; the sequence is ARNHLSHFCG…MPAHHHIDDE (94 aa). 2 consecutive RNase III domains span residues 956 to 1099 and 1141 to 1323; these read ANEL…IDGG and LSEI…IDSQ. Mg(2+) contacts are provided by Glu1178, Asp1309, and Glu1312.

Belongs to the helicase family. Dicer subfamily. Mg(2+) serves as cofactor. The cofactor is Mn(2+).

Its function is as follows. Dicer-like endonuclease involved in cleaving double-stranded RNA in the RNA interference (RNAi) pathway. Produces 21 to 25 bp dsRNAs (siRNAs) which target the selective destruction of homologous RNAs leading to sequence-specific suppression of gene expression, called post-transcriptional gene silencing (PTGS). Part of a broad host defense response against viral infection and transposons. This Coccidioides immitis (strain RS) (Valley fever fungus) protein is Dicer-like protein 2 (DCL2).